Here is a 304-residue protein sequence, read N- to C-terminus: Plasmodesmata-located protein 3 (304 aa).

The first 26 residues, 1–26 (MGFYSLKQLLLLYIIIMALFSDLKLA), serve as a signal peptide directing secretion. The Extracellular segment spans residues 27 to 272 (KSSSPEYTNL…SSSSGTTGKT (246 aa)). 2 consecutive Gnk2-homologous domains span residues 34 to 138 (TNLI…ISGF) and 143 to 242 (GMEL…FYPN). 6 disulfides stabilise this stretch: Cys-41–Cys-116, Cys-92–Cys-101, Cys-104–Cys-129, Cys-151–Cys-220, Cys-196–Cys-205, and Cys-208–Cys-233. A helical membrane pass occupies residues 273-293 (VAIIVGGTAGVGFLVICLLFV). The necessary and sufficient for plasmodesmal targeting stretch occupies residues 273 to 293 (VAIIVGGTAGVGFLVICLLFV). Topologically, residues 294 to 304 (KNLMKKKYDDY) are cytoplasmic.

Belongs to the cysteine-rich repeat secretory protein family. Plasmodesmata-located proteins (PDLD) subfamily. In terms of assembly, (Microbial infection) Interacts with Grapevine fanleaf virus (GFLV) 2B-MP. As to expression, highly expressed in inflorescence pedacel and shoot apex. Expressed in the outermost L1 layer of the shoot apical meristem and in the epidermis of bulging floral primordia. Within the L1, expression was restricted to the peripheral zone (at protein level).

Its subcellular location is the cell membrane. The protein resides in the cell junction. The protein localises to the plasmodesma. In terms of biological role, modulates cell-to-cell trafficking. In Arabidopsis thaliana (Mouse-ear cress), this protein is Plasmodesmata-located protein 3.